The chain runs to 511 residues: Coatomer subunit delta (511 aa).

Basic and acidic residues predominate over residues 168-177; sequence QARRDAERQG. The interval 168–188 is disordered; it reads QARRDAERQGKKAPGFGGFGS. A Phosphoserine modification is found at S223. An N6-acetyllysine mark is found at K233 and K241. The residue at position 244 (S244) is a Phosphoserine. An MHD domain is found at 271–511; sequence MESVHMKIEE…TFLVDKYEIL (241 aa). N6-acetyllysine is present on residues K309 and K351. S493 is subject to Phosphoserine.

The protein belongs to the adaptor complexes medium subunit family. Delta-COP subfamily. As to quaternary structure, oligomeric complex that consists of at least the alpha, beta, beta', gamma, delta, epsilon and zeta subunits.

It is found in the cytoplasm. The protein localises to the golgi apparatus membrane. Its subcellular location is the cytoplasmic vesicle. The protein resides in the COPI-coated vesicle membrane. In terms of biological role, the coatomer is a cytosolic protein complex that binds to dilysine motifs and reversibly associates with Golgi non-clathrin-coated vesicles, which further mediate biosynthetic protein transport from the ER, via the Golgi up to the trans Golgi network. Coatomer complex is required for budding from Golgi membranes, and is essential for the retrograde Golgi-to-ER transport of dilysine-tagged proteins. In mammals, the coatomer can only be recruited by membranes associated to ADP-ribosylation factors (ARFs), which are small GTP-binding proteins; the complex also influences the Golgi structural integrity, as well as the processing, activity, and endocytic recycling of LDL receptors. The polypeptide is Coatomer subunit delta (Arcn1) (Mus musculus (Mouse)).